The primary structure comprises 86 residues: RNA-binding protein Hfq (86 aa).

One can recognise a Sm domain in the interval 9 to 68; it reads DPYLNTLRKERVPVSIYLVNGIKLQGQIESFDQFVILLKNTVSQMVYKHAISTVVPSRPV. The segment at 66–86 is disordered; that stretch reads RPVRLPSAGDSEQADAEPGNA.

This sequence belongs to the Hfq family. Homohexamer.

Functionally, RNA chaperone that binds small regulatory RNA (sRNAs) and mRNAs to facilitate mRNA translational regulation in response to envelope stress, environmental stress and changes in metabolite concentrations. Also binds with high specificity to tRNAs. In Ectopseudomonas mendocina (strain ymp) (Pseudomonas mendocina), this protein is RNA-binding protein Hfq.